The chain runs to 214 residues: Pyridoxine/pyridoxamine 5'-phosphate oxidase (214 aa).

Substrate contacts are provided by residues 9 to 12 and K68; that span reads RRSY. Residues 63-68, 78-79, K85, and Q107 contribute to the FMN site; these read RVVLLK and YT. Substrate contacts are provided by Y125, R129, and S133. FMN-binding positions include 142–143 and W187; that span reads QS. 193–195 contributes to the substrate binding site; the sequence is RLH. R197 contributes to the FMN binding site.

Belongs to the pyridoxamine 5'-phosphate oxidase family. As to quaternary structure, homodimer. FMN serves as cofactor.

The enzyme catalyses pyridoxamine 5'-phosphate + O2 + H2O = pyridoxal 5'-phosphate + H2O2 + NH4(+). It catalyses the reaction pyridoxine 5'-phosphate + O2 = pyridoxal 5'-phosphate + H2O2. The protein operates within cofactor metabolism; pyridoxal 5'-phosphate salvage; pyridoxal 5'-phosphate from pyridoxamine 5'-phosphate: step 1/1. Its pathway is cofactor metabolism; pyridoxal 5'-phosphate salvage; pyridoxal 5'-phosphate from pyridoxine 5'-phosphate: step 1/1. Catalyzes the oxidation of either pyridoxine 5'-phosphate (PNP) or pyridoxamine 5'-phosphate (PMP) into pyridoxal 5'-phosphate (PLP). The protein is Pyridoxine/pyridoxamine 5'-phosphate oxidase of Christiangramia forsetii (strain DSM 17595 / CGMCC 1.15422 / KT0803) (Gramella forsetii).